We begin with the raw amino-acid sequence, 784 residues long: Ribosome biogenesis protein BOP1 homolog (784 aa).

Over residues 1–11 (MTKKLALKRRG) the composition is skewed to basic residues. The tract at residues 1–159 (MTKKLALKRR…DSDTSDEEDI (159 aa)) is disordered. Composition is skewed to acidic residues over residues 27–36 (SENEEEEEDL), 45–54 (EDSTDDEGID), 62–73 (SEELQFESDEEG), and 84–111 (AEEDEESSDEEDNEEEGSTDEEEVEDEE). 2 stretches are compositionally biased toward basic and acidic residues: residues 112 to 123 (KVSKSKQSDDKP) and 138 to 148 (LPKRDSSKPEY). Residues 149–158 (QDSDTSDEED) are compositionally biased toward acidic residues. WD repeat units lie at residues 445-486 (GHTD…RTIE), 488-526 (DEVVRCVAWCPNPKLSIIAVATGNRLLLVNPKVGDKVLV), 570-612 (THFK…SQIP), 615-653 (KSKGLIQFVLFHPVKPCFFVATQHNIRIYDLVKQELVKK), 656-695 (TNSKWISGMSIHPKGDNLLVSTYDKKMLWFDLDLSTKPYQ), 699-738 (LHRNAVRSVAFHRRYPLFASGSDDQAVIVSHGMVYNDLLQ), and 754-784 (RDEFGVLDVNWHPVQPWVFSTGADSTIRLYT).

This sequence belongs to the WD repeat BOP1/ERB1 family.

It localises to the nucleus. The protein resides in the nucleolus. Its subcellular location is the nucleoplasm. In terms of biological role, required for maturation of ribosomal RNAs and formation of the large ribosomal subunit. This is Ribosome biogenesis protein BOP1 homolog from Drosophila sechellia (Fruit fly).